A 213-amino-acid polypeptide reads, in one-letter code: Large ribosomal subunit protein uL1 (213 aa).

The protein belongs to the universal ribosomal protein uL1 family. In terms of assembly, part of the 50S ribosomal subunit.

Functionally, binds directly to 23S rRNA. Probably involved in E site tRNA release. Its function is as follows. Protein L1 is also a translational repressor protein, it controls the translation of its operon by binding to its mRNA. This Methanosarcina mazei (strain ATCC BAA-159 / DSM 3647 / Goe1 / Go1 / JCM 11833 / OCM 88) (Methanosarcina frisia) protein is Large ribosomal subunit protein uL1.